Reading from the N-terminus, the 40-residue chain is Large ribosomal subunit protein bL36 (40 aa).

Belongs to the bacterial ribosomal protein bL36 family.

The sequence is that of Large ribosomal subunit protein bL36 from Corynebacterium jeikeium (strain K411).